Reading from the N-terminus, the 256-residue chain is uncharacterized protein (256 aa).

The protein belongs to the glycosyltransferase 2 family.

This is an uncharacterized protein from Acanthamoeba polyphaga mimivirus (APMV).